Here is a 983-residue protein sequence, read N- to C-terminus: Alanine--tRNA ligase, mitochondrial (983 aa).

A mitochondrion-targeting transit peptide spans 1–24 (MTSTTGLRNLTLSFKKQLTTSTRT). Ser-504 bears the Phosphoserine mark. Positions 625, 629, 744, and 748 each coordinate Zn(2+). Residue Ser-975 is modified to Phosphoserine.

Belongs to the class-II aminoacyl-tRNA synthetase family. As to quaternary structure, monomer. Zn(2+) serves as cofactor.

It is found in the cytoplasm. The protein localises to the mitochondrion. It carries out the reaction tRNA(Ala) + L-alanine + ATP = L-alanyl-tRNA(Ala) + AMP + diphosphate. Its function is as follows. Catalyzes the attachment of alanine to tRNA(Ala) in a two-step reaction: alanine is first activated by ATP to form Ala-AMP and then transferred to the acceptor end of tRNA(Ala). Also edits incorrectly charged tRNA(Ala) via its editing domain. This Saccharomyces cerevisiae (strain ATCC 204508 / S288c) (Baker's yeast) protein is Alanine--tRNA ligase, mitochondrial.